We begin with the raw amino-acid sequence, 59 residues long: UPF0434 protein RHOS4_00640 (59 aa).

This sequence belongs to the UPF0434 family.

This is UPF0434 protein RHOS4_00640 from Cereibacter sphaeroides (strain ATCC 17023 / DSM 158 / JCM 6121 / CCUG 31486 / LMG 2827 / NBRC 12203 / NCIMB 8253 / ATH 2.4.1.) (Rhodobacter sphaeroides).